The following is a 439-amino-acid chain: Cysteine--tRNA ligase (439 aa).

Cysteine 26 lines the Zn(2+) pocket. Residues proline 28 to asparagine 38 carry the 'HIGH' region motif. Zn(2+) is bound by residues cysteine 206, histidine 231, and glutamate 235. Residues lysine 263–serine 267 carry the 'KMSKS' region motif. An ATP-binding site is contributed by lysine 266.

Belongs to the class-I aminoacyl-tRNA synthetase family. As to quaternary structure, monomer. The cofactor is Zn(2+).

The protein resides in the cytoplasm. The enzyme catalyses tRNA(Cys) + L-cysteine + ATP = L-cysteinyl-tRNA(Cys) + AMP + diphosphate. The sequence is that of Cysteine--tRNA ligase from Malacoplasma penetrans (strain HF-2) (Mycoplasma penetrans).